Here is a 66-residue protein sequence, read N- to C-terminus: Large ribosomal subunit protein bL35c (66 aa).

It belongs to the bacterial ribosomal protein bL35 family.

It localises to the plastid. It is found in the chloroplast. The sequence is that of Large ribosomal subunit protein bL35c from Guillardia theta (Cryptophyte).